A 400-amino-acid polypeptide reads, in one-letter code: Acetate kinase (400 aa).

A Mg(2+)-binding site is contributed by N10. K17 contributes to the ATP binding site. R91 lines the substrate pocket. The Proton donor/acceptor role is filled by D150. Residues 210-214, 285-287, and 333-337 each bind ATP; these read HLGNG, DCR, and GIGEN. E387 provides a ligand contact to Mg(2+).

It belongs to the acetokinase family. Homodimer. Mg(2+) serves as cofactor. Requires Mn(2+) as cofactor.

The protein localises to the cytoplasm. The catalysed reaction is acetate + ATP = acetyl phosphate + ADP. It participates in metabolic intermediate biosynthesis; acetyl-CoA biosynthesis; acetyl-CoA from acetate: step 1/2. Functionally, catalyzes the formation of acetyl phosphate from acetate and ATP. Can also catalyze the reverse reaction. The chain is Acetate kinase from Escherichia coli O157:H7.